Consider the following 164-residue polypeptide: Large ribosomal subunit protein uL11 (164 aa).

This sequence belongs to the universal ribosomal protein uL11 family. As to quaternary structure, part of the ribosomal stalk of the 50S ribosomal subunit. Interacts with L10 and the large rRNA to form the base of the stalk. L10 forms an elongated spine to which L12 dimers bind in a sequential fashion forming a multimeric L10(L12)X complex.

Its function is as follows. Forms part of the ribosomal stalk which helps the ribosome interact with GTP-bound translation factors. This chain is Large ribosomal subunit protein uL11, found in Pyrococcus abyssi (strain GE5 / Orsay).